The chain runs to 842 residues: Probable cleavage and polyadenylation specificity factor subunit 2 (842 aa).

The segment covering 414–425 (AEETRIRMERAR) has biased composition (basic and acidic residues). Disordered stretches follow at residues 414–442 (AEET…DDIA) and 708–747 (METF…SIPI). Acidic residues predominate over residues 432-441 (ESDDSDDDDI). Residues 731–747 (SNGQSKENDENASSIPI) are compositionally biased toward polar residues.

Belongs to the metallo-beta-lactamase superfamily. RNA-metabolizing metallo-beta-lactamase-like family. CPSF2/YSH1 subfamily. As to quaternary structure, CPSF is a heterotetramer composed of four distinct subunits 160, 100, 70 and 30 kDa.

It localises to the nucleus. CPSF plays a key role in pre-mRNA 3'-end formation, recognizing the AAUAAA signal sequence and interacting with poly(A)polymerase and other factors to bring about cleavage and poly(A) addition. The sequence is that of Probable cleavage and polyadenylation specificity factor subunit 2 from Caenorhabditis briggsae.